The primary structure comprises 143 residues: Interferon gamma (143 aa).

Residue Q1 is modified to Pyrrolidone carboxylic acid. N25 and N97 each carry an N-linked (GlcNAc...) asparagine glycan.

The protein belongs to the type II (or gamma) interferon family. In terms of assembly, homodimer. Interacts with IFNGR1 (via extracellular domain); this interaction promotes IFNGR1 dimerization.

The protein localises to the secreted. Type II interferon produced by immune cells such as T-cells and NK cells that plays crucial roles in antimicrobial, antiviral, and antitumor responses by activating effector immune cells and enhancing antigen presentation. Primarily signals through the JAK-STAT pathway after interaction with its receptor IFNGR1 to affect gene regulation. Upon IFNG binding, IFNGR1 intracellular domain opens out to allow association of downstream signaling components JAK2, JAK1 and STAT1, leading to STAT1 activation, nuclear translocation and transcription of IFNG-regulated genes. Many of the induced genes are transcription factors such as IRF1 that are able to further drive regulation of a next wave of transcription. Plays a role in class I antigen presentation pathway by inducing a replacement of catalytic proteasome subunits with immunoproteasome subunits. In turn, increases the quantity, quality, and repertoire of peptides for class I MHC loading. Increases the efficiency of peptide generation also by inducing the expression of activator PA28 that associates with the proteasome and alters its proteolytic cleavage preference. Up-regulates as well MHC II complexes on the cell surface by promoting expression of several key molecules such as cathepsins B/CTSB, H/CTSH, and L/CTSL. Participates in the regulation of hematopoietic stem cells during development and under homeostatic conditions by affecting their development, quiescence, and differentiation. The polypeptide is Interferon gamma (IFNG) (Pan troglodytes (Chimpanzee)).